A 277-amino-acid chain; its full sequence is Undecaprenyl-diphosphatase (277 aa).

Transmembrane regions (helical) follow at residues 47 to 67 (FNII…RGKI), 85 to 105 (ANLL…ADLI), 108 to 128 (WLFN…VMLW), 183 to 203 (AATE…AVYS), 218 to 238 (VFAV…RALL), and 249 to 269 (FAWY…FHLI).

Belongs to the UppP family.

The protein resides in the cell inner membrane. The enzyme catalyses di-trans,octa-cis-undecaprenyl diphosphate + H2O = di-trans,octa-cis-undecaprenyl phosphate + phosphate + H(+). Its function is as follows. Catalyzes the dephosphorylation of undecaprenyl diphosphate (UPP). Confers resistance to bacitracin. The polypeptide is Undecaprenyl-diphosphatase (Pseudomonas aeruginosa (strain UCBPP-PA14)).